The primary structure comprises 304 residues: Bifunctional phosphoglucose/phosphomannose isomerase (304 aa).

One can recognise an SIS domain in the interval 16–147 (FDKSFKVGKY…KPKIGDVDEA (132 aa)). 6 residues coordinate D-fructose 6-phosphate: Gly-35, Ser-36, Ser-74, Ser-76, Thr-79, and Arg-122. The active-site Proton acceptor is Glu-196. Residues His-212 and Lys-300 each coordinate D-fructose 6-phosphate. His-212 serves as the catalytic Proton donor. Lys-300 (proton acceptor) is an active-site residue.

It belongs to the PGI/PMI family. As to quaternary structure, homodimer.

The catalysed reaction is alpha-D-glucose 6-phosphate = beta-D-fructose 6-phosphate. It carries out the reaction D-mannose 6-phosphate = D-fructose 6-phosphate. Dual specificity isomerase that catalyzes the isomerization of both glucose-6-phosphate and mannose-6-phosphate to fructose-6-phosphate. The protein is Bifunctional phosphoglucose/phosphomannose isomerase of Thermoplasma volcanium (strain ATCC 51530 / DSM 4299 / JCM 9571 / NBRC 15438 / GSS1).